The primary structure comprises 526 residues: WRKY transcription factor 72A (526 aa).

Composition is skewed to basic and acidic residues over residues 40-52 and 60-76; these read KERK…DDNS and LTGD…KADM. 2 disordered regions span residues 40–76 and 170–200; these read KERK…KADM and SSTK…QTWP. The stretch at 62 to 106 forms a coiled coil; the sequence is GDKKDDQLESAKADMEEVMEENQRLKKHLDKIMKDYRNLQMQFHE. The segment covering 170–185 has biased composition (low complexity); sequence SSTKSSPSNLSPENSL. Positions 232-298 form a DNA-binding region, WRKY; that stretch reads CDTPTMNDGC…YEGTHNHPLP (67 aa).

The protein belongs to the WRKY group II-b family. As to expression, expressed in roots, trichomes and fruits.

The protein resides in the nucleus. Its function is as follows. Transcription activator involved in the transcriptional regulation of terpene biosynthesis in glandular trichomes. Binds to the promoter of the linalool synthase TPS5 and promotes TPS5 gene transactivation. In association with WRKY72B, contributes to basal defense against root-knot nematodes (RKNs) and potato aphids, as well as Mi-1-mediated gene-for-gene resistance to these pests. Both WRKY72A and WRKY72B are not required for gene-for-gene resistance mediated by Pto, another tomato R gene. This is WRKY transcription factor 72A from Solanum lycopersicum (Tomato).